The following is a 109-amino-acid chain: Small ribosomal subunit protein bS6 (109 aa).

This sequence belongs to the bacterial ribosomal protein bS6 family.

Functionally, binds together with bS18 to 16S ribosomal RNA. The sequence is that of Small ribosomal subunit protein bS6 from Ehrlichia chaffeensis (strain ATCC CRL-10679 / Arkansas).